The primary structure comprises 235 residues: Sugar fermentation stimulation protein homolog (235 aa).

This sequence belongs to the SfsA family.

The sequence is that of Sugar fermentation stimulation protein homolog from Aliivibrio salmonicida (strain LFI1238) (Vibrio salmonicida (strain LFI1238)).